Consider the following 592-residue polypeptide: MNDSCSWDQLWDQQGTLNEYTGKGIDLLERIMAYSKERASIELEYSSKLKALSKKTAMKMKSESELWNSVSYVKGFHDVIAGIVPVATQHELIAENLKSAVIPFTTQKIAEYRVAKKQLESDNSNLGKQLRMVIDEMAKSHKEYVKCYKETEAAMLKYAKAEKNMDISRLELEKTKNNYQQKCGMLEESKQTYAVMTTKANEEQSAHYDRKLPQLLDNYKKLHTNRILDTVEILSKCVEAESCVNQIIASCHNDMRRDIGLIDPSRDANLVVENMKSGHPVPQPFVFEDLGHPQDRSSFMGGGASGPAGSMDGMDATMKKGGTLMSKNGKGVARKQSMHQKFFGGGTADKKTDSGDYGTLPPQQRARKIAGKISDLEKEKDRATQSREGVSKMQAAYRENPKLGNPSDCDAQLAQYGHEIDALSNQIQKFKILLDDVNAQLGAGGLSATSVGGSDTPPSIRSVSSASSGVTSRVNTINDAHRTNGGVGGGRRESFSGSNGGSDTDPTINGNGHGRDELYEECSNPNPVLGEAIAQFAFDGAQDGTIRMEANEKLWLIEKDEGDGWTRVRKENNSADGFVPSSYLKVTWFGKV.

The F-BAR domain maps to 3–267; sequence DSCSWDQLWD…DIGLIDPSRD (265 aa). Disordered stretches follow at residues 343–366 and 447–519; these read FGGGTADKKTDSGDYGTLPPQQRA and SATS…DELY. Residues 359–436 enclose the REM-1 domain; that stretch reads TLPPQQRARK…IQKFKILLDD (78 aa). Residues 363-441 adopt a coiled-coil conformation; the sequence is QQRARKIAGK…ILLDDVNAQL (79 aa). Polar residues predominate over residues 447–457; it reads SATSVGGSDTP. The segment covering 459–474 has biased composition (low complexity); sequence SIRSVSSASSGVTSRV. Over residues 495-510 the composition is skewed to polar residues; that stretch reads FSGSNGGSDTDPTING. Positions 527–589 constitute an SH3 domain; that stretch reads PVLGEAIAQF…PSSYLKVTWF (63 aa).

This sequence belongs to the FNBP1 family. In terms of assembly, interacts (via SH3 domain) with wsp-1. Interacts with cdc-42 and (via SH3 domain) with wve-1. As to expression, expressed in the germline and specifically in the gonads.

Its subcellular location is the cell junction. The protein resides in the apical cell membrane. The protein localises to the basolateral cell membrane. It is found in the cytoplasmic vesicle. It localises to the cytoplasm. Its subcellular location is the perinuclear region. The protein resides in the recycling endosome. Its function is as follows. Plays a role in protein trafficking, actin organization and embryonic morphogenesis. Potentially acts as a cdc-42 effector. May play a role in hypodermal P-cell nuclear positioning. Together with toca-2, is required for protein trafficking regulating yolk protein clathrin-mediated endocytosis by oocytes during oogenesis and retrograde recycling and the sorting of recycling endosome cargo proteins such as mig-14. Also, together with toca-2, controls the distribution of actin at cell junctions. This chain is Transducer of Cdc42-dependent actin assembly protein 1 homolog, found in Caenorhabditis elegans.